Here is a 403-residue protein sequence, read N- to C-terminus: Probable protein phosphatase 2C 8 (403 aa).

The segment at Leu42–Ala80 is disordered. The segment covering Ser62 to Ser71 has biased composition (low complexity). The 299-residue stretch at Ser90–Leu388 folds into the PPM-type phosphatase domain. Mn(2+)-binding residues include Asp144, Gly145, Asp325, and Asp379.

Belongs to the PP2C family. Requires Mg(2+) as cofactor. The cofactor is Mn(2+).

The catalysed reaction is O-phospho-L-seryl-[protein] + H2O = L-seryl-[protein] + phosphate. It carries out the reaction O-phospho-L-threonyl-[protein] + H2O = L-threonyl-[protein] + phosphate. In Oryza sativa subsp. japonica (Rice), this protein is Probable protein phosphatase 2C 8.